A 113-amino-acid chain; its full sequence is Large ribosomal subunit protein uL22 (113 aa).

The protein belongs to the universal ribosomal protein uL22 family. As to quaternary structure, part of the 50S ribosomal subunit.

Functionally, this protein binds specifically to 23S rRNA; its binding is stimulated by other ribosomal proteins, e.g. L4, L17, and L20. It is important during the early stages of 50S assembly. It makes multiple contacts with different domains of the 23S rRNA in the assembled 50S subunit and ribosome. The globular domain of the protein is located near the polypeptide exit tunnel on the outside of the subunit, while an extended beta-hairpin is found that lines the wall of the exit tunnel in the center of the 70S ribosome. The protein is Large ribosomal subunit protein uL22 of Oceanobacillus iheyensis (strain DSM 14371 / CIP 107618 / JCM 11309 / KCTC 3954 / HTE831).